The sequence spans 581 residues: Probable peptidoglycan D,D-transpeptidase PenA (581 aa).

A helical transmembrane segment spans residues 28–48 (ISFVLMAMAVLFACLIARGLY). Ser310 (acyl-ester intermediate) is an active-site residue.

This sequence belongs to the transpeptidase family. FtsI subfamily.

The protein resides in the cell inner membrane. It carries out the reaction Preferential cleavage: (Ac)2-L-Lys-D-Ala-|-D-Ala. Also transpeptidation of peptidyl-alanyl moieties that are N-acyl substituents of D-alanine.. It functions in the pathway cell wall biogenesis; peptidoglycan biosynthesis. In terms of biological role, catalyzes cross-linking of the peptidoglycan cell wall at the division septum. This chain is Probable peptidoglycan D,D-transpeptidase PenA, found in Neisseria gonorrhoeae.